We begin with the raw amino-acid sequence, 210 residues long: MELHNIRDEYTKRVLSQHDCHENPISQFEQWQKEAIHAQVNEPTAMNIATVDEQGRPNSRMVLLKEVNEQGFVFFTNYLSRKGGCIEHNPYVALTFFWPELERQVRIEGKAVKIPAEQSDKYFATRPYTSRIGAWASEQSAVISNYKSLLAKAALVAAKHPLNVPRPDYWGGYLVVPETVEFWQGRPSRLHDRIRYRKESDNWIRERLSP.

Substrate is bound by residues 7-10 (RDEY) and Lys-65. Residues 60 to 65 (RMVLLK), 75 to 76 (FT), Arg-81, Lys-82, and Gln-104 each bind FMN. 3 residues coordinate substrate: Tyr-122, Arg-126, and Ser-130. Residues 139 to 140 (QS) and Trp-183 each bind FMN. 189 to 191 (RLH) serves as a coordination point for substrate. Arg-193 contacts FMN.

This sequence belongs to the pyridoxamine 5'-phosphate oxidase family. As to quaternary structure, homodimer. FMN serves as cofactor.

It carries out the reaction pyridoxamine 5'-phosphate + O2 + H2O = pyridoxal 5'-phosphate + H2O2 + NH4(+). It catalyses the reaction pyridoxine 5'-phosphate + O2 = pyridoxal 5'-phosphate + H2O2. Its pathway is cofactor metabolism; pyridoxal 5'-phosphate salvage; pyridoxal 5'-phosphate from pyridoxamine 5'-phosphate: step 1/1. It participates in cofactor metabolism; pyridoxal 5'-phosphate salvage; pyridoxal 5'-phosphate from pyridoxine 5'-phosphate: step 1/1. In terms of biological role, catalyzes the oxidation of either pyridoxine 5'-phosphate (PNP) or pyridoxamine 5'-phosphate (PMP) into pyridoxal 5'-phosphate (PLP). This Haemophilus influenzae (strain ATCC 51907 / DSM 11121 / KW20 / Rd) protein is Pyridoxine/pyridoxamine 5'-phosphate oxidase.